A 262-amino-acid polypeptide reads, in one-letter code: Carbonic anhydrase 1 (262 aa).

At A2 the chain carries N-acetylalanine. An Alpha-carbonic anhydrase domain is found at 4 to 261 (LNWSYEGENG…LKGRQVKASF (258 aa)). H65 (proton donor/acceptor) is an active-site residue. Residues H95, H97, and H120 each coordinate Zn(2+). Substrate contacts are provided by residues T200 and 200-201 (TH).

It belongs to the alpha-carbonic anhydrase family. Zn(2+) serves as cofactor.

Its subcellular location is the cytoplasm. It carries out the reaction hydrogencarbonate + H(+) = CO2 + H2O. It catalyses the reaction urea = cyanamide + H2O. With respect to regulation, inhibited by acetazolamide. In terms of biological role, catalyzes the reversible hydration of carbon dioxide. Can hydrate cyanamide to urea. The sequence is that of Carbonic anhydrase 1 (CA1) from Monodelphis domestica (Gray short-tailed opossum).